The following is a 637-amino-acid chain: MMSYSERLGGPAVSPLPVRGRHMVHGAAFAYVPSPQVLHRIPGTTTYAISSLSPVALTEHSCPYGEVLECHDPLPAKLAQEEEQKPEPRLSQKLAQVGTKLLKVPLMLGFLYLFVCSLDVLSSAFQLAGGKVAGDIFKDNAILSNPVAGLVVGILVTVLVQSSSTSTSIIVSMVSSGLLEVSSAIPIIMGSNIGTSVTNTIVALMQAGDRTDFRRAFAGATVHDCFNWLSVLVLLPLEAATGYLHHVTGLVVASFNIRGGRDAPDLLKVITEPFTKLIIQLDKSVITSIAVGDESLRNHSLIRIWCQPETKEASTSMSRVEAIGSLANTTMEKCNHIFVDTGLPDLAVGLILLAGSLVVLCTCLILLVKMLNSLLKGQVANVIQKVINTDFPAPFTWVTGYFAMVVGASMTFVVQSSSVFTSAITPLIGLGVISIERAYPLTLGSNIGTTTTAILAALASPREKLSSSFQIALCHFFFNISGILLWYPLPCTRLPIRMAKALGKRTAKYRWFAVLYLLVCFLLLPSLVFGISMAGWQAMVGVGTPFGALLAFVVLVNVLQSRSPGHLPKWLQTWDFLPRWMHSLQPLDGLITRATLCYARPEPRSPQLPPRVFLEELPPATPSPRLALPAHHNATRL.

Residues 1 to 103 (MMSYSERLGG…LAQVGTKLLK (103 aa)) lie on the Cytoplasmic side of the membrane. Ser14 and Ser34 each carry phosphoserine. Residues 104–125 (VPLMLGFLYLFVCSLDVLSSAF) form a helical membrane-spanning segment. Over 126–145 (QLAGGKVAGDIFKDNAILSN) the chain is Extracellular. The helical transmembrane segment at 146 to 163 (PVAGLVVGILVTVLVQSS) threads the bilayer. The Cytoplasmic segment spans residues 164–216 (STSTSIIVSMVSSGLLEVSSAIPIIMGSNIGTSVTNTIVALMQAGDRTDFRRA). The helical transmembrane segment at 217 to 236 (FAGATVHDCFNWLSVLVLLP) threads the bilayer. Intrachain disulfides connect Cys225-Cys520 and Cys306-Cys334. Residues 237–345 (LEAATGYLHH…HIFVDTGLPD (109 aa)) lie on the Extracellular side of the membrane. Asn298 and Asn328 each carry an N-linked (GlcNAc...) asparagine glycan. A helical membrane pass occupies residues 346-368 (LAVGLILLAGSLVVLCTCLILLV). Over 369-410 (KMLNSLLKGQVANVIQKVINTDFPAPFTWVTGYFAMVVGASM) the chain is Cytoplasmic. A helical transmembrane segment spans residues 411-434 (TFVVQSSSVFTSAITPLIGLGVIS). Over 435–464 (IERAYPLTLGSNIGTTTTAILAALASPREK) the chain is Extracellular. Residues 465–485 (LSSSFQIALCHFFFNISGILL) traverse the membrane as a helical segment. At 486-511 (WYPLPCTRLPIRMAKALGKRTAKYRW) the chain is on the cytoplasmic side. Thr506 carries the phosphothreonine; by PKC modification. The helical transmembrane segment at 512-532 (FAVLYLLVCFLLLPSLVFGIS) threads the bilayer. The Extracellular segment spans residues 533 to 537 (MAGWQ). The helical transmembrane segment at 538 to 559 (AMVGVGTPFGALLAFVVLVNVL) threads the bilayer. The Cytoplasmic segment spans residues 560-637 (QSRSPGHLPK…LPAHHNATRL (78 aa)). Phosphoserine is present on Ser605. Residue Thr621 is modified to Phosphothreonine. The residue at position 623 (Ser623) is a Phosphoserine.

The protein belongs to the SLC34A transporter family. Interacts via its C-terminal region with NHERF4. Interacts with NHERF1. Interacts with TMEM174; regulates SLC34A1 internalization by PTH and FGF23. As to expression, kidney.

It is found in the apical cell membrane. The protein resides in the cell membrane. The enzyme catalyses 3 Na(+)(out) + phosphate(out) = 3 Na(+)(in) + phosphate(in). Its activity is regulated as follows. Transport activity is significantly increased in response to dietary phosphate deprivation. In terms of biological role, involved in actively transporting phosphate into cells via Na(+) cotransport in the renal brush border membrane. The cotransport has a Na(+):Pi stoichiometry of 3:1 and is electrogenic. This is Sodium-dependent phosphate transport protein 2A from Rattus norvegicus (Rat).